A 201-amino-acid chain; its full sequence is MKGKLITLEGIDGSGKSTITRFLNSHPAFANAVFTKEPTTSWIGDAVYKAIQSDTDELAELMLFTADHADHISTLIRPAIEEGKIVISDRYSDSRYAYQGVTLKERMEEPMEWIQMIHRGWTIIPDLTLLFDIDPAVAVQRCGKRGEQTKFEKTDLLKGVRENYLKLAEKEPERFVVIDTDRDLKEIEKDVLQAITSIIES.

G10 to S17 provides a ligand contact to ATP.

The protein belongs to the thymidylate kinase family.

The enzyme catalyses dTMP + ATP = dTDP + ADP. This chain is Probable thymidylate kinase, found in Methanococcoides burtonii (strain DSM 6242 / NBRC 107633 / OCM 468 / ACE-M).